A 314-amino-acid polypeptide reads, in one-letter code: tRNA pseudouridine synthase B (314 aa).

D54 (nucleophile) is an active-site residue.

It belongs to the pseudouridine synthase TruB family. Type 1 subfamily.

It carries out the reaction uridine(55) in tRNA = pseudouridine(55) in tRNA. Responsible for synthesis of pseudouridine from uracil-55 in the psi GC loop of transfer RNAs. This Ralstonia nicotianae (strain ATCC BAA-1114 / GMI1000) (Ralstonia solanacearum) protein is tRNA pseudouridine synthase B.